The primary structure comprises 384 residues: Prokineticin receptor 2 (384 aa).

Residues 1–54 (MAAQNGNTSFTPNFNPPQDHASSLSFNFSYGDYDLPMDEDEDMTKTRTFFAAKI) are Extracellular-facing. Asn-7 and Asn-27 each carry an N-linked (GlcNAc...) asparagine glycan. The chain crosses the membrane as a helical span at residues 55-75 (VIGIALAGIMLVCGIGNFVFI). The Cytoplasmic segment spans residues 76–89 (AALTRYKKLRNLTN). The helical transmembrane segment at 90–110 (LLIANLAISDFLVAIICCPFE) threads the bilayer. The Extracellular portion of the chain corresponds to 111 to 136 (MDYYVVRQLSWEHGHVLCASVNYLRT). A disulfide bridge connects residues Cys-128 and Cys-208. A helical transmembrane segment spans residues 137 to 157 (VSLYVSTNALLAIAIDRYLAI). Residues 158–171 (VHPLKPRMNYQTAS) are Cytoplasmic-facing. A helical transmembrane segment spans residues 172–192 (FLIALVWMVSILIAIPSAYFA). The Extracellular segment spans residues 193–223 (TETVLFIVKSQEKIFCGQIWPVDQQLYYKSY). A helical transmembrane segment spans residues 224 to 244 (FLFIFGVEFVGPVVTMTLCYA). At 245–273 (RISRELWFKAVPGFQTEQIRKRLRCRRKT) the chain is on the cytoplasmic side. Residues 274–294 (VLVLMCILTAYVLCWAPFYGF) form a helical membrane-spanning segment. The Extracellular portion of the chain corresponds to 295 to 313 (TIVRDFFPTVFVKEKHYLT). Residues 314 to 334 (AFYVVECIAMSNSMINTVCFV) form a helical membrane-spanning segment. Over 335-384 (TVKNNTMKYFKKMMLLHWRPSQRGSKSSADLDLRTNGVPTTEEVDCIRLK) the chain is Cytoplasmic.

This sequence belongs to the G-protein coupled receptor 1 family. As to quaternary structure, homodimer. As to expression, expressed in the ileocecum, thyroid gland, pituitary gland, salivary gland, adrenal gland, testis, ovary and brain.

Its subcellular location is the cell membrane. In terms of biological role, receptor for prokineticin 2. Exclusively coupled to the G(q) subclass of heteromeric G proteins. Activation leads to mobilization of calcium, stimulation of phosphoinositide turnover and activation of p44/p42 mitogen-activated protein kinase. The polypeptide is Prokineticin receptor 2 (PROKR2) (Homo sapiens (Human)).